We begin with the raw amino-acid sequence, 170 residues long: MTEEIQNWMHKAFQMAQDALNNGEVPVGCLMVYDNQVVGKGRNEVNETKNATRHAEMVAIDQVLDWCEKNSKKSRDVFENIVLYVTVEPCIMCAGALRLLKIPLVVYGCRNERFGGCGSVLNVAGDNIPDTGTEFKYIGGYQAEKAVELLKTFYKQENPNAPRSKVRKKE.

In terms of domain architecture, CMP/dCMP-type deaminase spans 3 to 128 (EEIQNWMHKA…SVLNVAGDNI (126 aa)). Histidine 54 provides a ligand contact to Zn(2+). Residue glutamate 56 is the Proton donor of the active site. 2 residues coordinate Zn(2+): cysteine 90 and cysteine 93.

It belongs to the cytidine and deoxycytidylate deaminase family. ADAT2 subfamily. It depends on Zn(2+) as a cofactor.

The catalysed reaction is adenosine(34) in tRNA + H2O + H(+) = inosine(34) in tRNA + NH4(+). In terms of biological role, probably participates in deamination of adenosine-34 to inosine in many tRNAs. This chain is tRNA-specific adenosine deaminase 2 (adat2), found in Xenopus tropicalis (Western clawed frog).